The primary structure comprises 307 residues: NAD(+) hydrolase TcpC (307 aa).

The chain crosses the membrane as a helical span at residues 22 to 42 (YNILFFIFLSIAIPFLLFLAW). Residues 169 to 303 (THYDFFISHA…EIARELAEIA (135 aa)) form the TIR domain. NAD(+)-binding positions include 178–179 (AK) and glutamate 208. Glutamate 244 is a catalytic residue.

As to quaternary structure, interacts with host MYD88. Interacts with host TLR4.

It localises to the secreted. The protein localises to the membrane. It carries out the reaction NAD(+) + H2O = ADP-D-ribose + nicotinamide + H(+). The catalysed reaction is NADP(+) + H2O = ADP-D-ribose 2'-phosphate + nicotinamide + H(+). Its function is as follows. Virulence factor that suppresses host Toll-like receptor (TLR)-mediated cytokine production upon infection, thereby increasing bacterial burden in the urinary tract and promoting renal tissue damage. Acts as a NAD(+) hydrolase (NADase) by catalyzing cleavage of NAD(+) into ADP-D-ribose (ADPR) and nicotinamide. Also able to hydrolyze NADP(+), but not other NAD(+)-related molecules. This chain is NAD(+) hydrolase TcpC, found in Escherichia coli O6:H1 (strain CFT073 / ATCC 700928 / UPEC).